The chain runs to 188 residues: Large ribosomal subunit protein uL5 (188 aa).

The protein belongs to the universal ribosomal protein uL5 family. In terms of assembly, part of the 50S ribosomal subunit; part of the 5S rRNA/L5/L18/L25 subcomplex. Contacts the 5S rRNA and the P site tRNA. Forms a bridge to the 30S subunit in the 70S ribosome.

Its function is as follows. This is one of the proteins that bind and probably mediate the attachment of the 5S RNA into the large ribosomal subunit, where it forms part of the central protuberance. In the 70S ribosome it contacts protein S13 of the 30S subunit (bridge B1b), connecting the 2 subunits; this bridge is implicated in subunit movement. Contacts the P site tRNA; the 5S rRNA and some of its associated proteins might help stabilize positioning of ribosome-bound tRNAs. The polypeptide is Large ribosomal subunit protein uL5 (Aquifex pyrophilus).